We begin with the raw amino-acid sequence, 396 residues long: Acetate kinase (396 aa).

N8 is a binding site for Mg(2+). K15 contributes to the ATP binding site. A substrate-binding site is contributed by R89. The Proton donor/acceptor role is filled by D146. ATP-binding positions include 206–210, 283–285, and 331–335; these read HIGNG, DMR, and GVGEN. E383 contacts Mg(2+).

It belongs to the acetokinase family. In terms of assembly, homodimer. It depends on Mg(2+) as a cofactor. Requires Mn(2+) as cofactor.

Its subcellular location is the cytoplasm. It carries out the reaction acetate + ATP = acetyl phosphate + ADP. It participates in metabolic intermediate biosynthesis; acetyl-CoA biosynthesis; acetyl-CoA from acetate: step 1/2. Its function is as follows. Catalyzes the formation of acetyl phosphate from acetate and ATP. Can also catalyze the reverse reaction. The protein is Acetate kinase of Streptococcus pneumoniae (strain JJA).